The sequence spans 370 residues: Zinc finger protein 830 (370 aa).

Disordered regions lie at residues 1–21 and 75–220; these read MASS…QEEL and HRER…LVPH. Residue alanine 2 is modified to N-acetylalanine. The stretch at 16–40 forms a coiled coil; sequence VNQEELRRLMKEKQRLSTNRKRIES. The C2H2-type zinc-finger motif lies at 53 to 75; it reads CALCNTPVKSELLWQTHVLGKQH. Over residues 90–99 the composition is skewed to polar residues; that stretch reads QGPSAGTAPQ. Over residues 104-115 the composition is skewed to basic and acidic residues; that stretch reads KTTDVESQDAKK. Positions 121–134 are enriched in polar residues; the sequence is DQVQPSTSASSANF. Over residues 156 to 171 the composition is skewed to acidic residues; that stretch reads DYEEEEEEEEEEELGG. The segment covering 172–191 has biased composition (basic and acidic residues); the sequence is GEERRDSSKHLPDAQGREHS. Residues 196–212 show a composition bias toward polar residues; it reads RETTSNVLPNDPFNTNP. Serine 223 carries the post-translational modification Phosphoserine. Residues 310 to 338 are a coiled coil; the sequence is IECYRRVEKLRNRQDEIKNKLKEVLTIKE. Serine 349 and serine 360 each carry phosphoserine.

As to quaternary structure, component of the XAB2 complex, a multimeric protein complex composed of XAB2, PRPF19, AQR, ZNF830, ISY1, and PPIE; this complex binds preferentially to RNA. Interacts with XAB2. Identified in a pentameric intron-binding (IB) complex composed of AQR, XAB2, ISY1, ZNF830 and PPIE that is incorporated into the spliceosome as a preassembled complex. The IB complex does not contain PRPF19. Post-translationally, phosphorylated in response to DNA damage by the cell cycle checkpoint kinases ATR/ATM.

The protein localises to the nucleus. The protein resides in the chromosome. It is found in the nucleus speckle. Functionally, may play a role in pre-mRNA splicing as component of the spliceosome. Acts as an important regulator of the cell cycle that participates in the maintenance of genome integrity. During cell cycle progression in embryonic fibroblast, prevents replication fork collapse, double-strand break formation and cell cycle checkpoint activation. Controls mitotic cell cycle progression and cell survival in rapidly proliferating intestinal epithelium and embryonic stem cells. During the embryo preimplantation, controls different aspects of M phase. During early oocyte growth, plays a role in oocyte survival by preventing chromosomal breaks formation, activation of TP63 and reduction of transcription. This chain is Zinc finger protein 830, found in Rattus norvegicus (Rat).